The chain runs to 888 residues: Leukocyte tyrosine kinase receptor (888 aa).

Residues Met1–Thr16 form the signal peptide. At Ile17–Pro421 the chain is on the extracellular side. Intrachain disulfides connect Cys73/Cys86 and Cys168/Cys179. Residues Leu226–Gly294 form a disordered region. Over residues Gly260–Gly273 the composition is skewed to gly residues. A disulfide bridge connects residues Cys297 and Cys319. N-linked (GlcNAc...) asparagine glycans are attached at residues Asn377 and Asn409. The chain crosses the membrane as a helical span at residues Leu422–Val446. Topologically, residues Asn447 to Gln888 are cytoplasmic. Residues Val506 to Val782 form the Protein kinase domain. ATP is bound by residues Leu512–Val520 and Lys540. The active-site Proton acceptor is the Asp639. Tyr672 is subject to Phosphotyrosine; by autocatalysis. A disordered region spans residues Thr857–Gln888. Positions Asn877–Gln888 are enriched in polar residues.

Belongs to the protein kinase superfamily. Tyr protein kinase family. Insulin receptor subfamily. As to quaternary structure, homodimer; homodimerizes following ligand-binding. Part of a complex including LTK, TNK2 and GRB2, in which GRB2 promotes LTK recruitment by TNK2. Post-translationally, phosphorylated at tyrosine residues by autocatalysis, which activates kinase activity. In terms of tissue distribution, subsets of lymphoid and neuronal cells.

The protein resides in the cell membrane. The protein localises to the endoplasmic reticulum. It carries out the reaction L-tyrosyl-[protein] + ATP = O-phospho-L-tyrosyl-[protein] + ADP + H(+). Its activity is regulated as follows. Activated by ligand-binding, leading to homodimerization and autophosphorylation. Receptor with a tyrosine-protein kinase activity. Following activation by ALKAL1 or ALKAL2 ligands at the cell surface, transduces an extracellular signal into an intracellular response. Ligand-binding to the extracellular domain induces tyrosine kinase activation, leading to activation of the mitogen-activated protein kinase (MAPK) pathway. Phosphorylates almost exclusively at the first tyrosine of the Y-x-x-x-Y-Y motif. The exact function of this protein is not known; studies with chimeric proteins demonstrate its ability to promote growth and specifically neurite outgrowth, and cell survival. Involved in regulation of the secretory pathway involving endoplasmic reticulum (ER) export sites (ERESs) and ER to Golgi transport. This Mus musculus (Mouse) protein is Leukocyte tyrosine kinase receptor.